A 520-amino-acid polypeptide reads, in one-letter code: Putative transporter svop-1 (520 aa).

At 1–85 (MGDKAILTEV…LGFGRFQLKL (85 aa)) the chain is on the cytoplasmic side. A helical membrane pass occupies residues 86 to 106 (SILTGMAWMADAMEMMLLSLI). At 107 to 120 (SPALACEWGISSVQ) the chain is on the extracellular side. The helical transmembrane segment at 121 to 141 (QALVTTCVFSGMMLSSTFWGK) threads the bilayer. Residues 142–157 (ICDRFGRRKGLTFSTL) are Cytoplasmic-facing. Residues 158 to 178 (VACIMGVISGMSPHFYVLLFF) form a helical membrane-spanning segment. Residue Arg179 is a topological domain, extracellular. A helical membrane pass occupies residues 180-200 (GLTGFGIGGVPQSVTLYAEFL). The Cytoplasmic segment spans residues 201 to 208 (PTAQRAKC). Residues 209–229 (VVLIESFWAIGAVFEALLAYF) traverse the membrane as a helical segment. Over 230–237 (VMESFGWR) the chain is Extracellular. A helical transmembrane segment spans residues 238–258 (ALMFLSSLPLGIFAVASFWLP). Residues 259 to 319 (ESARFDMASG…LLSPDLRKTT (61 aa)) lie on the Cytoplasmic side of the membrane. A helical membrane pass occupies residues 320 to 340 (ILLWCIWAITAFSYYGMVLFT). At 341–372 (TVLFQSHDECHGGLFSNGTQMEVCQPLTRSDY) the chain is on the extracellular side. The chain crosses the membrane as a helical span at residues 373 to 393 (FDLLSTTLAEFPGLIITVLII). The Cytoplasmic portion of the chain corresponds to 394 to 410 (EWFGRKKTMALEYAVFA). Residues 411–431 (IFTFLLYFCLDRFTVTVLIFV) traverse the membrane as a helical segment. The Extracellular segment spans residues 432–434 (ARA). Residues 435 to 455 (FISGAFQCAYVYTPEVYPTTL) traverse the membrane as a helical segment. Residues 456-461 (RAVGLG) are Cytoplasmic-facing. A helical transmembrane segment spans residues 462 to 487 (TCSAMARIGAIVTPFIAQVASEKSLS). Topologically, residues 488 to 489 (LP) are extracellular. A helical membrane pass occupies residues 490–509 (IGIYGTAAILGLIASLSLPI). Topologically, residues 510–520 (ETKGRQMMDSH) are cytoplasmic.

The protein belongs to the major facilitator superfamily.

Its subcellular location is the membrane. The protein is Putative transporter svop-1 of Caenorhabditis elegans.